The chain runs to 103 residues: uncharacterized protein (103 aa).

The EthD domain maps to 12–88 (ADPAAFDEHY…AAADVANFAS (77 aa)).

This is an uncharacterized protein from Rhodococcus erythropolis (Arthrobacter picolinophilus).